We begin with the raw amino-acid sequence, 625 residues long: 1-deoxy-D-xylulose-5-phosphate synthase (625 aa).

Thiamine diphosphate-binding positions include His80 and 121–123 (GHS). Asp152 contacts Mg(2+). Residues 153–154 (GA), Asn181, Tyr290, and Glu371 contribute to the thiamine diphosphate site. A Mg(2+)-binding site is contributed by Asn181.

Belongs to the transketolase family. DXPS subfamily. In terms of assembly, homodimer. Mg(2+) serves as cofactor. It depends on thiamine diphosphate as a cofactor.

The catalysed reaction is D-glyceraldehyde 3-phosphate + pyruvate + H(+) = 1-deoxy-D-xylulose 5-phosphate + CO2. It functions in the pathway metabolic intermediate biosynthesis; 1-deoxy-D-xylulose 5-phosphate biosynthesis; 1-deoxy-D-xylulose 5-phosphate from D-glyceraldehyde 3-phosphate and pyruvate: step 1/1. In terms of biological role, catalyzes the acyloin condensation reaction between C atoms 2 and 3 of pyruvate and glyceraldehyde 3-phosphate to yield 1-deoxy-D-xylulose-5-phosphate (DXP). The sequence is that of 1-deoxy-D-xylulose-5-phosphate synthase from Haemophilus influenzae (strain ATCC 51907 / DSM 11121 / KW20 / Rd).